Reading from the N-terminus, the 79-residue chain is Small ribosomal subunit protein bS18B (79 aa).

It belongs to the bacterial ribosomal protein bS18 family. As to quaternary structure, part of the 30S ribosomal subunit. Forms a tight heterodimer with protein bS6.

Its function is as follows. Binds as a heterodimer with protein bS6 to the central domain of the 16S rRNA, where it helps stabilize the platform of the 30S subunit. This Saccharopolyspora erythraea (strain ATCC 11635 / DSM 40517 / JCM 4748 / NBRC 13426 / NCIMB 8594 / NRRL 2338) protein is Small ribosomal subunit protein bS18B.